A 695-amino-acid chain; its full sequence is Elongation factor G 2 (695 aa).

Residues 5-280 (SKYRNIGIFA…AVVDYLPSPT (276 aa)) form the tr-type G domain. Residues 14–21 (AHVDAGKT), 78–82 (DTPGH), and 132–135 (NKLD) each bind GTP.

It belongs to the TRAFAC class translation factor GTPase superfamily. Classic translation factor GTPase family. EF-G/EF-2 subfamily.

It is found in the cytoplasm. Catalyzes the GTP-dependent ribosomal translocation step during translation elongation. During this step, the ribosome changes from the pre-translocational (PRE) to the post-translocational (POST) state as the newly formed A-site-bound peptidyl-tRNA and P-site-bound deacylated tRNA move to the P and E sites, respectively. Catalyzes the coordinated movement of the two tRNA molecules, the mRNA and conformational changes in the ribosome. The protein is Elongation factor G 2 of Vibrio vulnificus (strain YJ016).